The chain runs to 365 residues: Galactoside alpha-(1,2)-fucosyltransferase 1 (365 aa).

At 1–8 the chain is on the cytoplasmic side; the sequence is MWLRSHRQ. Residues 9–25 traverse the membrane as a helical; Signal-anchor for type II membrane protein segment; that stretch reads LCLAFLLVCVLSVIFFL. At 26–365 the chain is on the lumenal side; that stretch reads HIHQDSFPHG…LSPLWTLAKP (340 aa). Asn65 and Asn327 each carry an N-linked (GlcNAc...) asparagine glycan.

The protein belongs to the glycosyltransferase 11 family.

Its subcellular location is the golgi apparatus. The protein localises to the golgi stack membrane. The enzyme catalyses a beta-D-galactosyl-(1-&gt;4)-N-acetyl-beta-D-glucosaminyl derivative + GDP-beta-L-fucose = an alpha-L-Fuc-(1-&gt;2)-beta-D-Gal-(1-&gt;4)-beta-D-GlcNAc derivative + GDP + H(+). The catalysed reaction is a ganglioside GA1 + GDP-beta-L-fucose = a ganglioside Fuc-GA1 + GDP + H(+). It catalyses the reaction a beta-D-Gal-(1-&gt;3)-beta-D-GlcNAc-(1-&gt;3)-beta-D-Gal-(1-&gt;4)-beta-D-Glc-(1&lt;-&gt;1')-Cer(d18:1(4E)) + GDP-beta-L-fucose = alpha-L-fucosyl-(1-&gt;2)- beta-D-galactosyl-(1-&gt;3)-N-acetyl-beta-D-glucosaminyl-(1-&gt;3)-beta-D-galactosyl-(1-&gt;4)-beta-D-glucosyl-(1&lt;-&gt;1')-N-acylsphing-4-enine + GDP + H(+). It carries out the reaction a neolactoside nLc4Cer(d18:1(4E)) + GDP-beta-L-fucose = a neolactoside IV(2)-alpha-Fuc-nLc4Cer(d18:1(4E)) + GDP + H(+). The enzyme catalyses a ganglioside GM1 + GDP-beta-L-fucose = a ganglioside Fuc-GM1 + GDP + H(+). The catalysed reaction is beta-D-galactosyl-(1-&gt;3)-N-acetyl-D-galactosamine + GDP-beta-L-fucose = alpha-L-fucosyl-(1-&gt;2)-beta-D-galactosyl-(1-&gt;3)-N-acetyl-D-galactosamine + GDP + H(+). It participates in protein modification; protein glycosylation. Functionally, catalyzes the transfer of L-fucose, from a guanosine diphosphate-beta-L-fucose, to the terminal galactose residue of glycoconjugates through an alpha(1,2) linkage leading to H antigen synthesis that is an intermediate substrate in the synthesis of ABO blood group antigens. H antigen is essential for maturation of the glomerular layer of the main olfactory bulb, in cell migration and early cell-cell contacts during tumor associated angiogenesis. Preferentially fucosylates soluble lactose and to a lesser extent fucosylates glycolipids gangliosides GA1 and GM1a. The chain is Galactoside alpha-(1,2)-fucosyltransferase 1 from Homo sapiens (Human).